The sequence spans 463 residues: NADH dehydrogenase [ubiquinone] iron-sulfur protein 2, mitochondrial (463 aa).

A mitochondrion-targeting transit peptide spans 1–33 (MAALRALCGFRGVAAQVLRPGAGVRLPIQPSRG). K62 is modified (N6-acetyllysine). R118 bears the Symmetric dimethylarginine mark. The [4Fe-4S] cluster site is built by C326, C332, and C347.

Belongs to the complex I 49 kDa subunit family. In terms of assembly, core subunit of respiratory chain NADH dehydrogenase (Complex I) which is composed of 45 different subunits. Component of the iron-sulfur (IP) fragment of the enzyme. Interacts with NDUFAF3. Interacts with NDUFAF7. Interacts with CERS2. The cofactor is [4Fe-4S] cluster. In terms of processing, dimethylation at Arg-118 by NDUFAF7 takes place after NDUFS2 assembles into the complex I, leading to stabilize the early intermediate complex.

The protein localises to the mitochondrion inner membrane. It carries out the reaction a ubiquinone + NADH + 5 H(+)(in) = a ubiquinol + NAD(+) + 4 H(+)(out). Functionally, core subunit of the mitochondrial membrane respiratory chain NADH dehydrogenase (Complex I) which catalyzes electron transfer from NADH through the respiratory chain, using ubiquinone as an electron acceptor. Essential for the catalytic activity and assembly of complex I. Redox-sensitive, critical component of the oxygen-sensing pathway in the pulmonary vasculature which plays a key role in acute pulmonary oxygen-sensing and hypoxic pulmonary vasoconstriction. Plays an important role in carotid body sensing of hypoxia. Essential for glia-like neural stem and progenitor cell proliferation, differentiation and subsequent oligodendrocyte or neuronal maturation. The polypeptide is NADH dehydrogenase [ubiquinone] iron-sulfur protein 2, mitochondrial (NDUFS2) (Pan troglodytes (Chimpanzee)).